Here is a 1002-residue protein sequence, read N- to C-terminus: Probable transport protein MmpL10 (1002 aa).

A run of 12 helical transmembrane segments spans residues 1-21 (MVGCWVALALVLPMAVPSLAE), 177-197 (IAVMLLVILMVIYRNPVTMLL), 199-219 (LVTIGASLMTAQALVAGVSLV), 228-248 (AIVLLSAMIAGAGTDYAVFLI), 268-288 (AMMSVGKVIAASAATVGITFL), 306-326 (AIGIAVSFLAAVTLLPAILVL), 358-378 (YLGASLIGLVALASCASLAHF), 806-826 (IVAVTVVVVILILMALLRAIV), 835-855 (VVISYMSAIGLGVVVFQVFLG), 862-882 (VPGLAFVVLVAVGADYNMLLA), 901-921 (VRCTGGVITAAGLIFAASMSG), and 923-943 (LFSSIGTVVQGGFIIGVGILI).

It belongs to the resistance-nodulation-cell division (RND) (TC 2.A.6) family. MmpL subfamily.

The protein resides in the cell membrane. In Mycobacterium bovis (strain ATCC BAA-935 / AF2122/97), this protein is Probable transport protein MmpL10 (mmpL10).